A 685-amino-acid polypeptide reads, in one-letter code: Protein argonaute (685 aa).

The tract at residues 1-99 (MNHLGKTEVF…LYPKGRRPLD (99 aa)) is N-terminal domain. The segment at 100 to 176 (PKDPGERSVL…VDPAYRILCE (77 aa)) is linker L1. Positions 169-265 (PAYRILCEMS…HLTGLLVPVL (97 aa)) constitute a PAZ domain. The interval 272 to 337 (EEEGSLALSL…SKPADALRVG (66 aa)) is linker L2. The segment at 338 to 463 (FYRAQETALA…LLAKAGLQVV (126 aa)) is mid domain. The tract at residues 464 to 685 (ALSGAYPAEL…EVDREKLFFV (222 aa)) is PIWI domain. Residues D478, E512, D546, and D660 contribute to the active site. D478 lines the Mn(2+) pocket. Positions 507–671 (EAQAGERIPQ…LVKEVGRLGI (165 aa)) constitute a Piwi domain. Residues D546, D660, and V685 each coordinate Mn(2+).

The protein belongs to the argonaute family. Long pAgo subfamily. Coimmunoprecipitates with a number of proteins involved in DNA replication or recombination including RepA (initiates replication), AddA/B (TT_C0638 and TT_C0639), ArgR, GyrA/B, HU (TT_C0984), PriA, Rad52 (TT_C1923), RecJ, SSB, TopA and UvrB. Most proteins remain associated with TtAgo after DNase treatment and associate with catalytically inactive protein. Requires Mn(2+) as cofactor.

Functionally, a DNA-guided ssDNA endonuclease. Uses short ssDNA sequences as guides (gDNA, also called small interfering DNA, siDNA) to bind complementary DNA target strands, resulting in cleavage of the target DNA (tDNA). The cleavage site is 10 nucleotides (nt) downstream of the target residue base-paired with the 5'-end of the gDNA. Plays a role in completion of DNA replication, participates in decatenating replicated DNA and plasmid. In situ purifies with 5'-phosphorylated long DNA (about 1160 nt, maps to the whole chromosome and plasmid), 25-35 nt RNAs that map to the whole chromosome and 15-18 nt DNA that maps to the replication terminus region (ter) on the chromosome and plasmid. Most short DNA starts with dC. Has been shown to have guide sequence-independent dsDNase activity called 'chopping', which requires unstable DNA (high AT-content, multiple mismatches or low salt conditions), and could be used to generate gDNA. Preferentially binds tDNA with dC at its 3'-terminus. Has also been shown to have no detectable guide sequence-independent dsDNase activity. The latter study proposes TtAgo may acquire gDNA from nicked dsDNA, by binding to 5'-phosphorylated-dC nicks, then cleaving 10 nt away on the opposite strand; subsequently an exonuclease (maybe AddA-AddB helicase/nuclease) trims the ends to generate the gDNA. Its function is as follows. Involved in defense against invading mobile genetic elements. TtAgo interferes with plasmid DNA, stimulates expression of specific endogenous genes, including various CRISPR loci and at least part of the CRISPR adaptation machinery, but only when exogenous plasmid DNA is present. Upon purification from E.coli associates with gDNA 13-25 nt long with 5'-phosphorylated ends and with 10-150 nt RNA with 5'-OH. DNA corresponds to the expression plasmid rather than chromosomal DNA; 89% of gDNA starts with dC and 72% has dA in the second position. Endonucleolytically cleaves tDNA with 5'-phosphorylated gDNA but not 5'-phosphorylated gRNA; the active site is involved in processing or binding of ssDNA. Nicks or linearizes supercoiled plasmid target when it has the appropriate gDNA sequences, does not cleave linear tDNA. Positions 4 to 16 of the tDNA need to be base paired to the gDNA for efficient tDNA cleavage. Although the system can support single nucleotide insertions in either the gDNA or tDNA, in all cases cleavage activity is reduced, with a wide range of sequence- and position-specific effects. In terms of biological role, first characterized as a DNA-guided RNA endonuclease. Uses gDNA to bind complementary RNA target strands, resulting in cleavage of the target RNA. The cleavage site is 10 nucleotides (nt) downstream of the target residue base-paired with the 5'-end of the guide DNA. The protein is Protein argonaute of Thermus thermophilus (strain ATCC BAA-163 / DSM 7039 / HB27).